The chain runs to 600 residues: MDIKSKSLEELTDLCDTLRDKILKTVSSNGGHLSSNMGAVELSVAMHYVFDVSKDPFIFDVSHQSYAHKLLTDRWNRFDSLRQFNGISGYTKPSESKFDYFVAGHSSTSISLVVGACKAIKLKGENRLPVAVIGDGAMSAGMAYEALNELGDRKYPCVIILNDNEMSISKPIGALSKYLSQMMAGQFYQKFKARVNQFLSYVPDSAAYMAKRFEEGFRLITPGMFFEELGLEYIGPVDGHDLKELISTFTTAKLMNKPVIVHIQTIKGKGYELAEGPKEKWHGVSPFNLKNGQSVNQANQKSATNIFSELLLNLAKKYENVVGVTAAMPSGTGLNKIIEVFPDRFWDVAIAEQHAVTSMAAMAKEGFKPYIAIYSTFMQRAYDQVIHDCAIMRLPVVFCMDRAGIVGEDGETHQGAFDISFLNAIPNLNLVAPRDEESFKNIMEFSYAFDSPLAIRYPRGNFILNNEYKSQKTALAKGEILENGDGSVAFIGYGNGVGKAVQTAKKLNFKPTIVDLVFAKPLDKELLLQIAKTHNKWYVFSDSAKRGGIGEILAGFLQENLLTNILIKSFEYEDTFIKHGKTSVVEDYLSISAEKISNTF.

Residues histidine 63 and 104–106 (GHS) each bind thiamine diphosphate. Residue aspartate 135 participates in Mg(2+) binding. Thiamine diphosphate is bound by residues 136-137 (GA), asparagine 164, tyrosine 271, and glutamate 352. Residue asparagine 164 participates in Mg(2+) binding.

It belongs to the transketolase family. DXPS subfamily. In terms of assembly, homodimer. Mg(2+) is required as a cofactor. It depends on thiamine diphosphate as a cofactor.

It catalyses the reaction D-glyceraldehyde 3-phosphate + pyruvate + H(+) = 1-deoxy-D-xylulose 5-phosphate + CO2. It participates in metabolic intermediate biosynthesis; 1-deoxy-D-xylulose 5-phosphate biosynthesis; 1-deoxy-D-xylulose 5-phosphate from D-glyceraldehyde 3-phosphate and pyruvate: step 1/1. Catalyzes the acyloin condensation reaction between C atoms 2 and 3 of pyruvate and glyceraldehyde 3-phosphate to yield 1-deoxy-D-xylulose-5-phosphate (DXP). The sequence is that of 1-deoxy-D-xylulose-5-phosphate synthase from Campylobacter fetus subsp. fetus (strain 82-40).